The sequence spans 377 residues: Iris (377 aa).

N-linked (GlcNAc...) asparagine glycans are attached at residues Asn11 and Asn226.

This sequence belongs to the serpin family. As to expression, female saliva (at protein level). Female salivary gland (at protein level).

The protein resides in the secreted. In terms of biological role, serine protease inhibitor with anticoagulant and immunosuppressive properties that can modulate blood feeding of ticks on vertebrate species. Strongly inhibits human leukocyte elastase (ELANE) and porcine pancreatic elastase. Moderately inhibits human tPA/tissue-type plasminogen activator (PLAT), coagulation factor Xa (F10), thrombin (F2) and trypsin. Does not inhibit human plasmin (PLG). Inhibits platelet aggregation. Inhibits the intrinsic pathway of blood coagulation in the host. Inhibits fibrinolysis in the host. Inhibits proliferation of mouse splenocytes. Decreases the number of IFN-gamma (IFNG)-producing human peripheral blood mononuclear cells (PBMCs) after stimulation with phytohemagglutinin A (PHA). Increases the number of IL10-producing human PBMCs after stimulation with lipopolysaccharides (LPS) with no significant effect on IL10 production. Inhibits production of IFNG, IL6, TNF-alpha (TNF) and CXCL8 by human PBMCs. Binds to monocyte/macrophage subpopulation of the host PBMCs. Increases both survival rate and survival time in mice with LPS-induced endotoxemic shock. This chain is Iris, found in Ixodes ricinus (Common tick).